Here is a 212-residue protein sequence, read N- to C-terminus: Probable plastid-lipid-associated protein 11, chloroplastic (212 aa).

The transit peptide at 1-25 (MALALSLSACSPPLRRTRRAGFRTS) directs the protein to the chloroplast.

The protein belongs to the PAP/fibrillin family.

It is found in the plastid. Its subcellular location is the chloroplast thylakoid. The polypeptide is Probable plastid-lipid-associated protein 11, chloroplastic (PAP11) (Arabidopsis thaliana (Mouse-ear cress)).